A 322-amino-acid polypeptide reads, in one-letter code: tRNA uridine(34) hydroxylase (322 aa).

The Rhodanese domain occupies 125–219 (QSPDTVVIDA…YGKDPEVQGK (95 aa)). The Cysteine persulfide intermediate role is filled by Cys179.

The protein belongs to the TrhO family.

It carries out the reaction uridine(34) in tRNA + AH2 + O2 = 5-hydroxyuridine(34) in tRNA + A + H2O. In terms of biological role, catalyzes oxygen-dependent 5-hydroxyuridine (ho5U) modification at position 34 in tRNAs. This Bacillus pumilus (strain SAFR-032) protein is tRNA uridine(34) hydroxylase.